Reading from the N-terminus, the 514-residue chain is Ubiquitin carboxyl-terminal hydrolase 22 (514 aa).

The UBP-type zinc-finger motif lies at Pro10–Met127. Cys12, His14, Cys52, Cys55, Cys65, Cys68, Cys73, His78, His82, His88, Cys101, and Cys104 together coordinate Zn(2+). Lys118 carries the N6-acetyllysine modification. Thr136 is modified (phosphothreonine). The USP domain occupies Arg165–Gln509. The Nucleophile role is filled by Cys174. Residue Ser226 is modified to Phosphoserine. The Proton acceptor role is filled by His468.

It belongs to the peptidase C19 family. UBP8 subfamily. As to quaternary structure, component of some SAGA transcription coactivator-HAT complexes, at least composed of ATXN7, ATXN7L3, ENY2, GCN5L2, SUPT3H, TAF10, TRRAP and USP22. Within the SAGA complex, ATXN7L3, ENY2 and USP22 form a subcomplex required for histone deubiquitination. Interacts directly with ATXN7L3; leading to its recruitment to the SAGA complex. Interacts with ATXN7L3 and weakly with ATXN7L3B. Interacts with MED1. In terms of processing, phosphorylated in G2/M phase, but not in G1 phase by CDK1. Post-translationally, ubiquitinated and subsequently degraded in a CDC20-dependent manner.

It is found in the nucleus. The protein resides in the cytoplasm. It carries out the reaction Thiol-dependent hydrolysis of ester, thioester, amide, peptide and isopeptide bonds formed by the C-terminal Gly of ubiquitin (a 76-residue protein attached to proteins as an intracellular targeting signal).. In terms of biological role, deubiquitinase that plays a role in several cellular processes including transcriptional regulation, cell cycle progression or innate immunity. As part of the transcription regulatory histone acetylation (HAT) complex SAGA, catalyzes the deubiquitination of both histones H2A and H2B, thereby acting as a transcriptional coactivator. Recruited to specific gene promoters by activators such as MYC, where it is required for transcription. Facilitates cell-cycle progression by stabilizing CCNB1 and antagonizing its proteasome-mediated degradation in a cell cycle-specific manner. Modulates cell cycle progression and apoptosis also by antagonizing TP53 transcriptional activation through deacetylase SIRT1 stabilization. Plays multiple roles in immunity and inflammation. Participates in antiviral response by deubiquitinating the importin KPNA2, leading to IRF3 nuclear translocation and subsequent type I interferon production. Acts as a central regulator of type III IFN signaling by negatively regulating STING1 activation and ubiquitination. Inhibits NLRP3 inflammasome activation by promoting NLRP3 degradation through ATG5-dependent autophagy. Deubiquitinates CD274 to induce its stabilization and thereby participates in maintenance of immune tolerance to self. Controls necroptotic cell death by regulating RIPK3 phosphorylation and ubiquitination. During bacterial infection, promotes pro-inflammatory response by targeting TRAF6 and removing its 'Lys-48'-linked polyubiquitination. The sequence is that of Ubiquitin carboxyl-terminal hydrolase 22 (USP22) from Bos taurus (Bovine).